The sequence spans 435 residues: Transcription factor tau 55 kDa subunit (435 aa).

Positions 362 to 417 are disordered; that stretch reads GLLSPTEENETTNAGQSKGSSTANDPNIQIQEEDVGLPDSTNTSRDHTGDKEEVQS. Ser365 is subject to Phosphoserine. The span at 372–391 shows a compositional bias: polar residues; it reads TTNAGQSKGSSTANDPNIQI. Residues 405-417 are compositionally biased toward basic and acidic residues; it reads SRDHTGDKEEVQS.

Component of the TFIIIC complex composed of TFC1, TFC3, TFC4, TFC6, TFC7 and TFC8. The subunits are organized in two globular domains, tauA and tauB, connected by a proteolysis-sensitive and flexible linker.

It localises to the nucleus. TFIIIC mediates tRNA and 5S RNA gene activation by binding to intragenic promoter elements. Upstream of the transcription start site, TFIIIC assembles the initiation complex TFIIIB-TFIIIC-tDNA, which is sufficient for RNA polymerase III recruitment and function. Part of the tauA domain of TFIIIC that binds boxA DNA promoter sites of tRNA and similar genes. This chain is Transcription factor tau 55 kDa subunit (TFC7), found in Saccharomyces cerevisiae (strain ATCC 204508 / S288c) (Baker's yeast).